Consider the following 1205-residue polypeptide: Centrosome and spindle pole associated protein 1 (1205 aa).

Coiled-coil stretches lie at residues 12–34 and 87–108; these read QKAK…EMKG and KLKE…TQAK. The disordered stretch occupies residues 16-37; sequence LAKDKAELESDPPYMEMKGKAS. A compositionally biased stretch (basic and acidic residues) spans 158–173; that stretch reads STEKVRQVEKNIEPKS. 3 disordered regions span residues 158–187, 222–277, and 380–467; these read STEK…KSDL, SRRP…PGVS, and QQKK…GSTL. The span at 176-187 shows a compositional bias: polar residues; that stretch reads NKNPISQGKSDL. Composition is skewed to basic and acidic residues over residues 222-233 and 257-275; these read SRRPLKQTKEEV and ANGE…RDPG. Residues 357 to 391 adopt a coiled-coil conformation; that stretch reads EDRELTKRRKEKYRQELLEQIAEQQKKKRREKDLA. Basic and acidic residues-rich tracts occupy residues 401 to 410 and 417 to 428; these read DPEKSPDRLK and RHFEEMPPERPR. Position 405 is a phosphoserine (S405). Over residues 433–447 the composition is skewed to pro residues; that stretch reads TPPPPFSAPSSPSVP. Residues 574–618 adopt a coiled-coil conformation; it reads STQSLQSYQEALQEQIREREARRKKERLEKEEYEAKLEAEMRIYN. The segment at 677-704 is disordered; that stretch reads AENLEDSANKNSGPLQTQSSPFARGNTF. Polar residues predominate over residues 685–697; that stretch reads NKNSGPLQTQSSP. A coiled-coil region spans residues 724-813; that stretch reads RFQIEEKRQR…EKHNLQLQHY (90 aa). Residues S850 and S869 each carry the phosphoserine modification. A disordered region spans residues 862–881; the sequence is SSMSRAQSPPVPARKNQLRA. Positions 874-911 form a coiled coil; it reads ARKNQLRAEEEKKNVIMELSEMRKQLRSEERRLQGRLL. Phosphoserine is present on S915. Residues 993 to 1014 are a coiled coil; it reads QQQALLREQQKRLNRIKMRRDA. Disordered stretches follow at residues 1086–1105, 1124–1169, and 1182–1205; these read GLDF…SLKS, RLTE…RPGT, and NEEQ…AAHA. The span at 1124–1134 shows a compositional bias: basic and acidic residues; sequence RLTEQQKKPTN. Residues 1135–1145 are compositionally biased toward acidic residues; it reads TDDEGSLVDPD. Basic and acidic residues predominate over residues 1146–1156; that stretch reads DIMRHLSDDGR.

As to quaternary structure, interacts with PLEKHG6. Interacts with ARMC9, TOGARAM1, CCDC66, CEP104 and CEP290. Phosphorylated. Phosphorylation increases in colcemide-treated cells.

It localises to the cytoplasm. The protein resides in the cytoskeleton. The protein localises to the microtubule organizing center. It is found in the centrosome. Its subcellular location is the spindle. It localises to the spindle pole. The protein resides in the cell projection. The protein localises to the cilium. Its function is as follows. May play a role in cell-cycle-dependent microtubule organization. This chain is Centrosome and spindle pole associated protein 1 (Cspp1), found in Mus musculus (Mouse).